A 416-amino-acid chain; its full sequence is Ribosome biogenesis protein WDR12 homolog (416 aa).

The tract at residues 7–89 (VQVRFFTKQK…ESVVEIEYLE (83 aa)) is ubiquitin-like (UBL) domain. WD repeat units lie at residues 101 to 138 (VHDD…LAKV), 140 to 184 (GHTS…ASCV), 189 to 228 (GHTQ…EGGD), 259 to 297 (GHTQ…NKQT), 299 to 338 (TGSK…GQVV), 344 to 384 (SHQG…TPLY), and 388 to 416 (GHQD…LILY). Positions 226–245 (GGDEGENGSLSKKQKTTGVK) are disordered.

The protein belongs to the WD repeat WDR12/YTM1 family.

The protein resides in the nucleus. The protein localises to the nucleolus. It is found in the nucleoplasm. In terms of biological role, required for maturation of ribosomal RNAs and formation of the large ribosomal subunit. The polypeptide is Ribosome biogenesis protein WDR12 homolog (Nematostella vectensis (Starlet sea anemone)).